The primary structure comprises 1401 residues: DNA-directed RNA polymerase subunit beta'' (1401 aa).

Cysteine 224, cysteine 294, cysteine 301, and cysteine 304 together coordinate Zn(2+).

The protein belongs to the RNA polymerase beta' chain family. RpoC2 subfamily. In terms of assembly, in plastids the minimal PEP RNA polymerase catalytic core is composed of four subunits: alpha, beta, beta', and beta''. When a (nuclear-encoded) sigma factor is associated with the core the holoenzyme is formed, which can initiate transcription. It depends on Zn(2+) as a cofactor.

It is found in the plastid. The protein resides in the chloroplast. The catalysed reaction is RNA(n) + a ribonucleoside 5'-triphosphate = RNA(n+1) + diphosphate. DNA-dependent RNA polymerase catalyzes the transcription of DNA into RNA using the four ribonucleoside triphosphates as substrates. This is DNA-directed RNA polymerase subunit beta'' from Nymphaea alba (White water-lily).